Consider the following 948-residue polypeptide: Valine--tRNA ligase (948 aa).

The 'HIGH' region signature appears at 40–50; the sequence is PNVTGSLHMGH. The short motif at 551–555 is the 'KMSKS' region element; sequence KMSKS. Lys554 contacts ATP. Positions 879 to 947 form a coiled coil; that stretch reads LIDKGAELAR…LAEQHARISS (69 aa).

Belongs to the class-I aminoacyl-tRNA synthetase family. ValS type 1 subfamily. As to quaternary structure, monomer.

It is found in the cytoplasm. It carries out the reaction tRNA(Val) + L-valine + ATP = L-valyl-tRNA(Val) + AMP + diphosphate. In terms of biological role, catalyzes the attachment of valine to tRNA(Val). As ValRS can inadvertently accommodate and process structurally similar amino acids such as threonine, to avoid such errors, it has a 'posttransfer' editing activity that hydrolyzes mischarged Thr-tRNA(Val) in a tRNA-dependent manner. The protein is Valine--tRNA ligase of Pseudomonas fluorescens (strain ATCC BAA-477 / NRRL B-23932 / Pf-5).